A 349-amino-acid polypeptide reads, in one-letter code: Secondary metabolism regulator LAE1 (349 aa).

A disordered region spans residues 1 to 46 (MSSRNAPSGCVAPSPATAAPPSPTNLRLTVGQSGSESANEPGGEPE). The span at 25–38 (NLRLTVGQSGSESA) shows a compositional bias: polar residues.

It belongs to the methyltransferase superfamily. LaeA methyltransferase family. As to quaternary structure, component of the heterotrimeric velvet complex composed of LAE1, VEL1 and VEL2; VEL1 acting as a bridging protein between LAE1 and VEL2.

The protein resides in the nucleus. The catalysed reaction is L-methionyl-[protein] + S-adenosyl-L-methionine = S-methyl-L-methionyl-[protein] + S-adenosyl-L-homocysteine. Functionally, methyltransferase that performs automethylation. No other methyl-accepting substrate has been identified yet. Component of the velvet transcription factor complex that acts as a global regulator for secondary metabolite gene expression. Controls the expression of the gamma-pentyl-pyrone gene clusters. Required for the expression of cellulase. Regulates asexual sporulation (conidiation) by environmental stimuli such as light and/or mechanical injury. Required for oxidative stress tolerance. Also plays a role in defense and parasitism on other fungi. The protein is Secondary metabolism regulator LAE1 of Hypocrea atroviridis (strain ATCC 20476 / IMI 206040) (Trichoderma atroviride).